The sequence spans 135 residues: Helix-loop-helix protein 2 (135 aa).

The segment at 1-80 (MMLSPDQAAD…RRRATAKYRS (80 aa)) is disordered. The segment covering 10 to 21 (DSDHPSSAHSDP) has biased composition (basic and acidic residues). Residues 68-80 (KRRRRRATAKYRS) are compositionally biased toward basic residues. Positions 77–129 (KYRSAHATRERIRVEAFNLAFAELRKLLPTLPPDKKLSKIEILRLAICYISYL) constitute a bHLH domain.

In terms of assembly, homodimer. Interacts and may form heterodimers with STAT3.

It localises to the nucleus. Functionally, transcription factor which binds the E box motif 5'-CA[TC][AG]TG-3'. Involved in regulating energy expenditure, body mass, voluntary physical activity, mating behavior and reproductive longevity, acting through the hypothalamic-pituitary-gonadal axis. Acts as a transcriptional activator of target genes, including NDN, PCSK1, MC4R. Is also a transcriptional activator of KISS1. May act centrally to regulate function of both white and brown adipose tissue. Together with NHLH1, required to maintain migration and survival of cells in the anterior extramural migration stream (aes), which forms the precerebellar nuclei. Also, in concert with NHLH1, may determine fate of gonadotropin releasing hormone-1 (GnRH-1) neurons. This is Helix-loop-helix protein 2 (NHLH2) from Homo sapiens (Human).